Reading from the N-terminus, the 392-residue chain is Aryl-hydrocarbon-interacting protein-like 1 (392 aa).

Residues arginine 53–glutamine 145 form the PPIase FKBP-type domain. TPR repeat units follow at residues valine 178–leucine 211, asparagine 230–isoleucine 263, and valine 264–methionine 297. Residues glutamine 329–histidine 392 form a disordered region. Pro residues-rich tracts occupy residues proline 335–proline 346 and proline 355–proline 366.

Interacts with NUB1.

The protein localises to the cytoplasm. The protein resides in the nucleus. Its function is as follows. May be important in protein trafficking and/or protein folding and stabilization. This is Aryl-hydrocarbon-interacting protein-like 1 (AIPL1) from Macaca mulatta (Rhesus macaque).